Consider the following 278-residue polypeptide: uncharacterized protein (278 aa).

It belongs to the short-chain dehydrogenases/reductases (SDR) family.

This is an uncharacterized protein from Bacillus subtilis (strain 168).